We begin with the raw amino-acid sequence, 261 residues long: Adenosylcobinamide-GDP ribazoletransferase (261 aa).

The next 7 helical transmembrane spans lie at 4–26, 40–60, 62–82, 110–130, 140–160, 197–217, and 237–257; these read GLNG…QIPW, LTGL…SPFL, PLVL…GLHL, VGAF…LLLM, FTWL…VQLI, CFLL…IWLF, and IGAS…TFFL.

Belongs to the CobS family. Mg(2+) is required as a cofactor.

It is found in the cell membrane. The catalysed reaction is alpha-ribazole + adenosylcob(III)inamide-GDP = adenosylcob(III)alamin + GMP + H(+). The enzyme catalyses alpha-ribazole 5'-phosphate + adenosylcob(III)inamide-GDP = adenosylcob(III)alamin 5'-phosphate + GMP + H(+). It participates in cofactor biosynthesis; adenosylcobalamin biosynthesis; adenosylcobalamin from cob(II)yrinate a,c-diamide: step 7/7. Joins adenosylcobinamide-GDP and alpha-ribazole to generate adenosylcobalamin (Ado-cobalamin). Also synthesizes adenosylcobalamin 5'-phosphate from adenosylcobinamide-GDP and alpha-ribazole 5'-phosphate. The chain is Adenosylcobinamide-GDP ribazoletransferase from Halalkalibacterium halodurans (strain ATCC BAA-125 / DSM 18197 / FERM 7344 / JCM 9153 / C-125) (Bacillus halodurans).